The primary structure comprises 161 residues: Thy-1 membrane glycoprotein (161 aa).

Positions 1–19 (MNPVISITLLLSVLQMSRG) are cleaved as a signal peptide. Gln20 is subject to Pyrrolidone carboxylic acid. The Ig-like V-type domain maps to 20 to 126 (QRVISLTACL…NKTINVIRDK (107 aa)). 2 disulfide bridges follow: Cys28-Cys130 and Cys38-Cys104. The N-linked (GlcNAc...) (complex) asparagine; alternate glycan is linked to Asn42. An N-linked (GlcNAc...) (high mannose) asparagine; alternate glycan is attached at Asn42. Asn42 carries N-linked (GlcNAc...) asparagine; alternate glycosylation. Ser82 carries the post-translational modification Phosphoserine. Asn93 is a glycosylation site (N-linked (GlcNAc...) (complex) asparagine; alternate). An N-linked (GlcNAc...) asparagine; alternate glycan is attached at Asn93. Asn117 carries an N-linked (GlcNAc...) (high mannose) asparagine; in brain; alternate glycan. An N-linked (GlcNAc...) (hybrid) asparagine; in brain; alternate glycan is attached at Asn117. A lipid anchor (GPI-anchor amidated cysteine) is attached at Cys130. The propeptide at 131 to 161 (GGISLLVQNTSWLLLLLLSLSFLQATDFISL) is removed in mature form.

In terms of processing, glycosylation is tissue specific. Sialylation of N-glycans at Asn-93 in brain and at Asn-42, Asn-93 and Asn-117 in thymus. Abundant in lymphoid tissues.

Its subcellular location is the cell membrane. Its function is as follows. May play a role in cell-cell or cell-ligand interactions during synaptogenesis and other events in the brain. The polypeptide is Thy-1 membrane glycoprotein (Thy1) (Rattus norvegicus (Rat)).